A 158-amino-acid chain; its full sequence is Small ribosomal subunit protein uS9 (158 aa).

Belongs to the universal ribosomal protein uS9 family.

This chain is Small ribosomal subunit protein uS9, found in Rhodopseudomonas palustris (strain BisA53).